The sequence spans 534 residues: Prolyl 4-hydroxylase subunit alpha-1 (534 aa).

A signal peptide spans 1–17; sequence MIWVVLMMAILLPQSLA. An N-linked (GlcNAc...) asparagine glycan is attached at Asn113. The stretch at 205 to 238 is one TPR repeat; sequence VSVLDYLSYAVYQQGDLDKALLLTKKLLELDPEH. Asn259 is a glycosylation site (N-linked (GlcNAc...) asparagine). The Fe2OG dioxygenase domain maps to 411 to 519; it reads TAEELQVANY…KWVSNKWLHE (109 aa). The Fe cation site is built by His429, Asp431, and His500. Lys510 contributes to the 2-oxoglutarate binding site.

Belongs to the P4HA family. Heterotetramer of two alpha-1 chains and two beta chains (P4HB)(the beta chain is the multi-functional PDI), where P4HB plays the role of a structural subunit; this tetramer catalyzes the formation of 4-hydroxyproline in collagen. Requires Fe(2+) as cofactor. The cofactor is L-ascorbate. As to expression, expressed at least in brain, heart and lung.

It localises to the endoplasmic reticulum lumen. It carries out the reaction L-prolyl-[collagen] + 2-oxoglutarate + O2 = trans-4-hydroxy-L-prolyl-[collagen] + succinate + CO2. Inhibited by poly(L-proline). Its function is as follows. Catalyzes the post-translational formation of 4-hydroxyproline in -Xaa-Pro-Gly- sequences in collagens and other proteins. This chain is Prolyl 4-hydroxylase subunit alpha-1 (P4ha1), found in Mus musculus (Mouse).